The following is a 506-amino-acid chain: ATP synthase subunit alpha (506 aa).

170-177 (GDRQTGKT) lines the ATP pocket.

The protein belongs to the ATPase alpha/beta chains family. As to quaternary structure, F-type ATPases have 2 components, CF(1) - the catalytic core - and CF(0) - the membrane proton channel. CF(1) has five subunits: alpha(3), beta(3), gamma(1), delta(1), epsilon(1). CF(0) has four main subunits: a(1), b(1), b'(1) and c(9-12).

Its subcellular location is the cellular thylakoid membrane. It catalyses the reaction ATP + H2O + 4 H(+)(in) = ADP + phosphate + 5 H(+)(out). In terms of biological role, produces ATP from ADP in the presence of a proton gradient across the membrane. The alpha chain is a regulatory subunit. This is ATP synthase subunit alpha from Synechococcus sp. (strain CC9902).